A 100-amino-acid polypeptide reads, in one-letter code: Competence protein ComGE (100 aa).

A helical membrane pass occupies residues 15–35 (VILLEAVVALAIFASIATLLL).

As to quaternary structure, the transformation pili are flexible filaments, consisting mainly of the major pilin ComGC and smaller amounts of the minor pilins, including at least ComGD, ComGF and ComGG, and perhaps ComGE. Interacts with ComGD. Interacts with ComGF. Interacts with ComGG.

The protein resides in the cell membrane. It is found in the cell surface. In terms of biological role, required for formation of the type IV-like pilus (T4P) that plays a role in transformation. Transformation pili are dynamically extended and retracted, perhaps thereby promoting DNA uptake and transformation. Involved in transformation. Required for DNA binding. The sequence is that of Competence protein ComGE from Streptococcus pneumoniae (strain ATCC BAA-255 / R6).